The chain runs to 64 residues: Large ribosomal subunit protein bL28 (64 aa).

The segment at 1 to 23 (MSKECYFTGRKTVSSNNRSHAMN) is disordered. Residues 11–23 (KTVSSNNRSHAMN) are compositionally biased toward polar residues.

Belongs to the bacterial ribosomal protein bL28 family.

The sequence is that of Large ribosomal subunit protein bL28 from Lactococcus lactis subsp. cremoris (strain SK11).